Reading from the N-terminus, the 433-residue chain is uncharacterized protein (433 aa).

Residues 61-178 (RFNHSLGVYE…QIDADRMDYL (118 aa)) form the HD domain.

This is an uncharacterized protein from Bacillus subtilis (strain 168).